Consider the following 737-residue polypeptide: Alpha-adducin (737 aa).

M1 carries the post-translational modification N-acetylmethionine. The disordered stretch occupies residues 1-21 (MNGDSRAAVVTSPPPTTAPHK). A Phosphoserine modification is found at S12. S59 carries the phosphoserine; by PKA modification. S64 carries the post-translational modification Phosphoserine. Residue T331 is modified to Phosphothreonine. 5 positions are modified to phosphoserine: S334, S353, S355, S358, and S366. S408 carries the phosphoserine; by PKA modification. A compositionally biased stretch (polar residues) spans 419–430 (YSFTSDGDSGTC). 2 disordered regions span residues 419-490 (YSFT…NLFV) and 576-737 (RREV…KSES). Phosphoserine is present on S427. T429 is modified (phosphothreonine). At S431 the chain carries Phosphoserine. S436 carries the post-translational modification Phosphoserine; by PKA. T445 carries the phosphothreonine; by ROCK2 modification. 2 positions are modified to phosphoserine: S464 and S465. Phosphothreonine; by ROCK2 is present on T480. S481 is modified (phosphoserine; by PKA). Positions 576–601 (RREVERKQKGSEENLDEAREQKEKSP) are enriched in basic and acidic residues. Phosphoserine is present on residues S586, S600, and S613. A compositionally biased stretch (pro residues) spans 602–614 (PDQPAVPYPPPST). T614 is modified (phosphothreonine). Phosphoserine is present on residues S678, S707, S710, and S714. Over residues 687 to 714 (PVAEEAAPSAAEEGAAADPGSDGSPGKS) the composition is skewed to low complexity. Over residues 715 to 737 (PSKKKKKFRTPSFLKKSKKKSES) the composition is skewed to basic residues. A Phosphoserine; by PKC modification is found at S716. The segment at 717–734 (KKKKKFRTPSFLKKSKKK) is interaction with calmodulin. Phosphoserine; by PKA and PKC is present on S726.

The protein belongs to the aldolase class II family. Adducin subfamily. Heterodimer of an alpha and a beta subunit or an alpha and a gamma subunit.

It localises to the cytoplasm. It is found in the cytoskeleton. The protein resides in the cell membrane. In terms of biological role, membrane-cytoskeleton-associated protein that promotes the assembly of the spectrin-actin network. Binds to calmodulin. The sequence is that of Alpha-adducin (ADD1) from Pongo abelii (Sumatran orangutan).